Reading from the N-terminus, the 211-residue chain is Uracil phosphoribosyltransferase (211 aa).

Residue Lys30 to Arg34 coordinates GTP. 5-phospho-alpha-D-ribose 1-diphosphate contacts are provided by residues Arg79, Arg104, and Asp133–Thr141. Uracil-binding positions include Ile197 and Gly202–Ala204. Position 203 (Asp203) interacts with 5-phospho-alpha-D-ribose 1-diphosphate.

It belongs to the UPRTase family. Mg(2+) is required as a cofactor.

The catalysed reaction is UMP + diphosphate = 5-phospho-alpha-D-ribose 1-diphosphate + uracil. It functions in the pathway pyrimidine metabolism; UMP biosynthesis via salvage pathway; UMP from uracil: step 1/1. Its activity is regulated as follows. Allosterically activated by GTP. In terms of biological role, catalyzes the conversion of uracil and 5-phospho-alpha-D-ribose 1-diphosphate (PRPP) to UMP and diphosphate. The polypeptide is Uracil phosphoribosyltransferase (Pyrobaculum arsenaticum (strain DSM 13514 / JCM 11321 / PZ6)).